The sequence spans 97 residues: Ataxin-7-like protein 3B (97 aa).

The interval 76–97 (SLPGDPGDGPQTELQRSPPEFQ) is disordered. Phosphoserine is present on Ser92.

The protein belongs to the SGF11 family. In terms of assembly, interacts strongly with ENY2. Interacts weakly with USP22.

It is found in the cytoplasm. Its function is as follows. By binding to ENY2, interferes with the nuclear functions of the deubiquitinase (DUB) module of the SAGA complex which consists of ENY2, ATXN7, ATXN7L3 and the histone deubiquitinating component USP22. Affects USP22 DUB activity toward histones indirectly by changing the subcellular distribution of ENY2 and altering ENY2 availability for ATXN7L3 interaction. Regulates H2B monoubiquitination (H2Bub1) levels through cytoplasmic sequestration of ENY2 resulting in loss of nuclear ENY2-ATXN7L3 association which destabilizes ATXN7L3. Affects protein expression levels of ENY2 and ATXN7L3. This is Ataxin-7-like protein 3B (Atxn7l3b) from Mus musculus (Mouse).